Reading from the N-terminus, the 698-residue chain is Vertnin (698 aa).

The protein belongs to the vertnin family.

The protein resides in the nucleus. Functionally, acts as a transcription factor that regulates development of thoracic vertebrae. The protein is Vertnin (VRTN) of Sus scrofa (Pig).